A 132-amino-acid polypeptide reads, in one-letter code: Nickel-responsive regulator (132 aa).

Positions 76, 87, 89, and 95 each coordinate Ni(2+).

Belongs to the transcriptional regulatory CopG/NikR family. In terms of assembly, homotetramer. Ni(2+) serves as cofactor.

In terms of biological role, transcriptional repressor of the nikABCDE operon. Is active in the presence of excessive concentrations of intracellular nickel. This chain is Nickel-responsive regulator, found in Klebsiella pneumoniae (strain 342).